Reading from the N-terminus, the 357-residue chain is Carbamoyl phosphate synthase small chain (357 aa).

A CPSase region spans residues 1 to 168 (MSKRLLILED…STATAYPSPN (168 aa)). Residues Ser-46, Gly-220, and Gly-222 each coordinate L-glutamine. Positions 172–357 (KVVVVDFGLK…FMDLMDNFKK (186 aa)) constitute a Glutamine amidotransferase type-1 domain. The active-site Nucleophile is Cys-247. L-glutamine contacts are provided by Leu-248, Gln-251, Asn-289, Gly-291, and Tyr-292. Catalysis depends on residues His-331 and Asp-333.

This sequence belongs to the CarA family. As to quaternary structure, composed of two chains; the small (or glutamine) chain promotes the hydrolysis of glutamine to ammonia, which is used by the large (or ammonia) chain to synthesize carbamoyl phosphate. Tetramer of heterodimers (alpha,beta)4.

The enzyme catalyses hydrogencarbonate + L-glutamine + 2 ATP + H2O = carbamoyl phosphate + L-glutamate + 2 ADP + phosphate + 2 H(+). The catalysed reaction is L-glutamine + H2O = L-glutamate + NH4(+). It functions in the pathway amino-acid biosynthesis; L-arginine biosynthesis; carbamoyl phosphate from bicarbonate: step 1/1. The protein operates within pyrimidine metabolism; UMP biosynthesis via de novo pathway; (S)-dihydroorotate from bicarbonate: step 1/3. Small subunit of the glutamine-dependent carbamoyl phosphate synthetase (CPSase). CPSase catalyzes the formation of carbamoyl phosphate from the ammonia moiety of glutamine, carbonate, and phosphate donated by ATP, constituting the first step of 2 biosynthetic pathways, one leading to arginine and/or urea and the other to pyrimidine nucleotides. The small subunit (glutamine amidotransferase) binds and cleaves glutamine to supply the large subunit with the substrate ammonia. The sequence is that of Carbamoyl phosphate synthase small chain from Lactococcus lactis subsp. cremoris (strain MG1363).